The chain runs to 72 residues: Lantibiotic Flvbeta.e (72 aa).

Positions 1–34 are cleaved as a propeptide — cleaved by FlvT; that stretch reads MNNKEFNMEQFKKLAAVVSEDELDEMLDENVTGA. Residues 36–40 constitute a cross-link (lanthionine (Ser-Cys); by FlvM2); it reads SSIPC. A 2,3-didehydroalanine (Ser); by FlvM2 modification is found at Ser37. 2,3-didehydrobutyrine; by FlvM2 occurs at positions 48 and 49. 3 cross-links (beta-methyllanthionine (Thr-Cys); by FlvM2) span residues 55–61, 63–66, and 67–70; these read TTGFDWC, TGAC, and TTSC.

In terms of processing, contains LL-lanthionine and DL-beta-methyllanthionine, when coepressed in E.coli with the flavecin synthetase FlvM2.

It is found in the secreted. Functionally, lanthionine-containing peptide antibiotic (lantibiotic) that is probably active on Gram-positive bacteria, since its analog [Del1]Flvbeta.e shows antibacterial activity against Gram-positive bacteria. This activity is not synergistically enhanced by [Del2]Flvalpha.a, an analog of Flvalpha.a, which is encoded by the same operon than Flvbeta.e. The bactericidal activity of lantibiotics is based on depolarization of energized bacterial cytoplasmic membranes, initiated by the formation of aqueous transmembrane pores. The polypeptide is Lantibiotic Flvbeta.e (Ruminococcus flavefaciens).